The following is a 320-amino-acid chain: Polyketide transferase FFUJ_12241 (320 aa).

Residues 58-298 (RDITCLAWDP…ILKGKGHLDW (241 aa)) are abhydrolase domain.

Belongs to the polyketide transferase af380 family.

In terms of biological role, polyketide transferase; part of the gene cluster that mediates the biosynthesis of fujikurins A-D, secondary metabolites playing a role during rice infection. The polyketide synthase PKS19 acts with the trans-enoyl reductase FFUJ_12240 and the polyketide transferase FFUJ_12241 to produce fujikurins, however, the biosynthesis pathway has not been identified yet. This chain is Polyketide transferase FFUJ_12241, found in Gibberella fujikuroi (strain CBS 195.34 / IMI 58289 / NRRL A-6831) (Bakanae and foot rot disease fungus).